The following is a 458-amino-acid chain: Preferentially expressed antigen in melanoma-like protein 1 (458 aa).

The stretch at 99 to 126 is one LRR 1; degenerate repeat; sequence RCKLQVLDLRVMPLKLWNRLPVFGTAGC. The LRR 2; degenerate repeat unit spans residues 176–200; that stretch reads SLCCCKLQIWAMSMYYHRKLLEILD. The stretch at 201–227 is one LRR 3; degenerate repeat; that stretch reads LDSVQELRMYCISNPVCLLNFAPYLGR. Residues 228 to 263 form an LRR 4; degenerate repeat; sequence MRNLRCLILSHLWQTFSMTPVEKQQVITQFTSQFLK. LRR repeat units follow at residues 264–289, 290–321, 322–340, 346–373, and 374–398; these read LKCL…FWWL, KTPL…SQLK, HLNL…PLRV, ASTL…ALRC, and CTQL…LAYN.

Belongs to the PRAME family. Specifically expressed in testis (at protein level).

The protein resides in the cytoplasm. It is found in the cytoplasmic vesicle. It localises to the secretory vesicle. The protein localises to the acrosome. Its subcellular location is the cell projection. The protein resides in the cilium. It is found in the flagellum. Functionally, may play a role in acrosome development and also in sperm maturation and motility. This Mus musculus (Mouse) protein is Preferentially expressed antigen in melanoma-like protein 1.